A 488-amino-acid polypeptide reads, in one-letter code: MAQSVQERTRLKNKRYESGVIPYAKMGYWNPNYVVKDSDMLALFRVTPQPGVDPIEAAAAVAGESSTATWTVVWTDLLTACDVYRAKAYRVDPVPTAPDQYFVYIAYDIDLFEEGSIANLTASIIGNVFGFKAVKALRLEDMRIPFSYLKTFQGPATGVIVERERLNKFGRPLLGCTVKPKLGLSGKNYGRVVYEGLKGGLDFLKDDENINSQPFMRWRDRYLYVMEGVNRAAAASGEVKGSYLNVTAATMEECYKRAEFAKEVGSVIIMIDLVIGYTAIQTMAIWARENNMILHLHRAGNSTYSRQKNHGINFRVISKWMRMAGVDHIHAGTVVGKLEGDPIIIKGFYNTLLLPKLEVNLPQGLFFEMDWASLRKTLPVASGGIHAGQMHQLLHYLGEDVVLQFGGGTIGHPDGIQAGATANRVALEAMVLARNEGRDYFNEGPQILRDAAKNCGPLQTALDLWKDIAFNYTSTDTSDFVETPTANV.

Substrate-binding residues include N127 and T177. Catalysis depends on K179, which acts as the Proton acceptor. Residue K181 coordinates substrate. Positions 205, 207, and 208 each coordinate Mg(2+). K205 carries the post-translational modification N6-carboxylysine. The active-site Proton acceptor is the H297. R298, H330, and S382 together coordinate substrate.

Belongs to the RuBisCO large chain family. Type I subfamily. Heterohexadecamer of 8 large chains and 8 small chains. The cofactor is Mg(2+).

It is found in the plastid. It localises to the chloroplast. The enzyme catalyses 2 (2R)-3-phosphoglycerate + 2 H(+) = D-ribulose 1,5-bisphosphate + CO2 + H2O. It carries out the reaction D-ribulose 1,5-bisphosphate + O2 = 2-phosphoglycolate + (2R)-3-phosphoglycerate + 2 H(+). Its function is as follows. RuBisCO catalyzes two reactions: the carboxylation of D-ribulose 1,5-bisphosphate, the primary event in carbon dioxide fixation, as well as the oxidative fragmentation of the pentose substrate in the photorespiration process. Both reactions occur simultaneously and in competition at the same active site. The protein is Ribulose bisphosphate carboxylase large chain of Cyanidioschyzon merolae (strain NIES-3377 / 10D) (Unicellular red alga).